Consider the following 341-residue polypeptide: Acetylpolyamine amidohydrolase (341 aa).

Residues Y19, E106, and E117 each contribute to the substrate site. H159 functions as the Proton donor/acceptor in the catalytic mechanism. The Zn(2+) site is built by D195, H197, and D284. Y323 contributes to the substrate binding site.

This sequence belongs to the histone deacetylase family. As to quaternary structure, homodimer. It depends on Zn(2+) as a cofactor.

It carries out the reaction N-acetylputrescine + H2O = putrescine + acetate. It catalyses the reaction N-acetylcadaverine + H2O = cadaverine + acetate. The enzyme catalyses N(1)-acetylspermine + H2O = spermine + acetate. The catalysed reaction is N(1)-acetylspermidine + H2O = spermidine + acetate. It carries out the reaction N(8)-acetylspermidine + H2O = spermidine + acetate. Its pathway is amine and polyamine metabolism. With respect to regulation, zinc ions inhibit enzyme activity in a dose-dependent manner. Inhibited by KCl at concentrations above 10 mM. Inhibited by o-oxyquinoline in vitro, suggesting that it is a metalloprotein. Inhibited by various substrate N(8)-acetylspermidine analogs bearing different metal-binding groups such as trifluoromethylketone, thiol, or hydroxamate, and by hydroxamate analogs of short-chain acetyldiamines. Functionally, involved in polyamine metabolism. Catalyzes the deacetylation of various acetylated polyamines such as N-acetylputrescine, N-acetylcadaverine, N(1)-acetylspermine, N(1)-acetylspermidine and N(8)-acetylspermidine. In vitro, is also able to deacetylate L-Lys(epsilon-acetyl)coumarin, but has very low activity towards the larger tetrapeptide N-acetyl-L-Arg-L-His-L-Lys(epsilon-acetyl)-L-Lys(epsilon-acetyl)coumarin. This is Acetylpolyamine amidohydrolase from Mycoplana ramosa (Mycoplana bullata).